The sequence spans 64 residues: Outer envelope membrane protein 7 (64 aa).

At 1–11 (MGKTSGAKQAT) the chain is on the chloroplast intermembrane side. A helical transmembrane segment spans residues 12–32 (VVVAAMALGWLAIEIAFKPFL). The AKR2A-binding sequence (ABS) required for chloroplast outer envelope membrane targeting signature appears at 29-35 (KPFLDKF). The Cytoplasmic portion of the chain corresponds to 33 to 64 (DKFRSSIDKSDPTKDPDDFDTAATATTSKEGL). Residues 39-48 (IDKSDPTKDP) show a composition bias toward basic and acidic residues. Positions 39–64 (IDKSDPTKDPDDFDTAATATTSKEGL) are disordered. Low complexity predominate over residues 53–64 (TAATATTSKEGL).

Interacts with AKR2A. In terms of tissue distribution, confined to green tissues.

It is found in the plastid. Its subcellular location is the chloroplast outer membrane. The polypeptide is Outer envelope membrane protein 7 (Arabidopsis thaliana (Mouse-ear cress)).